Consider the following 248-residue polypeptide: Methionine aminopeptidase (248 aa).

Position 77 (H77) interacts with substrate. 3 residues coordinate a divalent metal cation: D94, D105, and H169. Residue H176 coordinates substrate. A divalent metal cation-binding residues include E202 and E233.

The protein belongs to the peptidase M24A family. Methionine aminopeptidase type 1 subfamily. Monomer. The cofactor is Co(2+). Zn(2+) serves as cofactor. Requires Mn(2+) as cofactor. It depends on Fe(2+) as a cofactor.

The enzyme catalyses Release of N-terminal amino acids, preferentially methionine, from peptides and arylamides.. Its function is as follows. Removes the N-terminal methionine from nascent proteins. The N-terminal methionine is often cleaved when the second residue in the primary sequence is small and uncharged (Met-Ala-, Cys, Gly, Pro, Ser, Thr, or Val). Requires deformylation of the N(alpha)-formylated initiator methionine before it can be hydrolyzed. The polypeptide is Methionine aminopeptidase (Mycoplasma genitalium (strain ATCC 33530 / DSM 19775 / NCTC 10195 / G37) (Mycoplasmoides genitalium)).